An 804-amino-acid chain; its full sequence is Leucine--tRNA ligase (804 aa).

The 'HIGH' region motif lies at 40 to 51 (PYPSGAGLHVGH). A 'KMSKS' region motif is present at residues 576–580 (KMSKS). Position 579 (Lys-579) interacts with ATP.

It belongs to the class-I aminoacyl-tRNA synthetase family.

It localises to the cytoplasm. It catalyses the reaction tRNA(Leu) + L-leucine + ATP = L-leucyl-tRNA(Leu) + AMP + diphosphate. The protein is Leucine--tRNA ligase of Bacillus licheniformis (strain ATCC 14580 / DSM 13 / JCM 2505 / CCUG 7422 / NBRC 12200 / NCIMB 9375 / NCTC 10341 / NRRL NRS-1264 / Gibson 46).